The following is a 207-amino-acid chain: Octanoyltransferase (207 aa).

The 176-residue stretch at 29–204 (DDTADELWLV…ELMVQLGDEE (176 aa)) folds into the BPL/LPL catalytic domain. Substrate-binding positions include 68-75 (RGGQVTYH), 135-137 (SLG), and 148-150 (GVA). The active-site Acyl-thioester intermediate is cysteine 166.

This sequence belongs to the LipB family.

It is found in the cytoplasm. The enzyme catalyses octanoyl-[ACP] + L-lysyl-[protein] = N(6)-octanoyl-L-lysyl-[protein] + holo-[ACP] + H(+). It participates in protein modification; protein lipoylation via endogenous pathway; protein N(6)-(lipoyl)lysine from octanoyl-[acyl-carrier-protein]: step 1/2. Its function is as follows. Catalyzes the transfer of endogenously produced octanoic acid from octanoyl-acyl-carrier-protein onto the lipoyl domains of lipoate-dependent enzymes. Lipoyl-ACP can also act as a substrate although octanoyl-ACP is likely to be the physiological substrate. The sequence is that of Octanoyltransferase from Methylococcus capsulatus (strain ATCC 33009 / NCIMB 11132 / Bath).